The primary structure comprises 526 residues: Exodeoxyribonuclease 7 large subunit (526 aa).

A disordered region spans residues 496–526; sequence GAMTTEGGTPPAGAKKRSAKPADPTKQGSLF.

This sequence belongs to the XseA family. Heterooligomer composed of large and small subunits.

The protein resides in the cytoplasm. It carries out the reaction Exonucleolytic cleavage in either 5'- to 3'- or 3'- to 5'-direction to yield nucleoside 5'-phosphates.. In terms of biological role, bidirectionally degrades single-stranded DNA into large acid-insoluble oligonucleotides, which are then degraded further into small acid-soluble oligonucleotides. In Rhizobium etli (strain CIAT 652), this protein is Exodeoxyribonuclease 7 large subunit.